Here is a 608-residue protein sequence, read N- to C-terminus: 2',5'-phosphodiesterase 12 (608 aa).

Residues 1–16 (MWRLPGRAALRGVRSV) constitute a mitochondrion transit peptide. Residues 91 to 111 (AKKSRKNRAHSSGGAACAATG) form a disordered region. The span at 100–111 (HSSGGAACAATG) shows a compositional bias: low complexity. Position 216 is a phosphoserine (S216). 3 residues coordinate Mg(2+): E350, D495, and N497. D495 (proton donor/acceptor) is an active-site residue.

This sequence belongs to the CCR4/nocturin family. Mg(2+) is required as a cofactor.

The protein localises to the mitochondrion matrix. The enzyme catalyses Exonucleolytic cleavage of poly(A) to 5'-AMP.. Its function is as follows. Enzyme that cleaves 2',5'-phosphodiester bond linking adenosines of the 5'-triphosphorylated oligoadenylates, triphosphorylated oligoadenylates referred as 2-5A modulates the 2-5A system. Degrades triphosphorylated 2-5A to produce AMP and ATP. Also cleaves 3',5'-phosphodiester bond of oligoadenylates. Plays a role as a negative regulator of the 2-5A system that is one of the major pathways for antiviral and antitumor functions induced by interferons (IFNs). Suppression of this enzyme increases cellular 2-5A levels and decreases viral replication in cultured small-airway epithelial cells. This is 2',5'-phosphodiesterase 12 (Pde12) from Rattus norvegicus (Rat).